The primary structure comprises 430 residues: Protein AST2 (430 aa).

Lipid raft-associated protein involved in the targeting of PMA1 from Golgi to the plasma membrane. May induce clustering of PMA1, which facilitates partition of PMA1 into lipid rafts after leaving the ER its and transport to the cell surface. This chain is Protein AST2, found in Saccharomyces cerevisiae (strain ATCC 204508 / S288c) (Baker's yeast).